Consider the following 1526-residue polypeptide: DNA topoisomerase 2-alpha (1526 aa).

Residue methionine 1 is modified to N-acetylmethionine. The disordered stretch occupies residues 1–21; that stretch reads MELSPLQPVNENMQMNKKKNE. Serine 4 carries the phosphoserine modification. Lysine 17 participates in a covalent cross-link: Glycyl lysine isopeptide (Lys-Gly) (interchain with G-Cter in SUMO2). ATP is bound by residues asparagine 90, asparagine 119, and 147–149; that span reads SSN. Glycyl lysine isopeptide (Lys-Gly) (interchain with G-Cter in SUMO2) cross-links involve residues lysine 155 and lysine 156. An ATP-binding site is contributed by 160 to 167; it reads GRNGYGAK. Lysine 260 participates in a covalent cross-link: Glycyl lysine isopeptide (Lys-Gly) (interchain with G-Cter in SUMO2). Threonine 281 carries the post-translational modification Phosphothreonine. Residues 341 to 343 form an interaction with DNA region; sequence KKK. Lysine 351 participates in a covalent cross-link: Glycyl lysine isopeptide (Lys-Gly) (interchain with G-Cter in SUMO2). 375 to 377 lines the ATP pocket; the sequence is QTK. Residues lysine 385, lysine 396, lysine 415, lysine 417, lysine 424, and lysine 439 each participate in a glycyl lysine isopeptide (Lys-Gly) (interchain with G-Cter in SUMO2) cross-link. A Toprim domain is found at 454–571; it reads CTLILTEGDS…SLLRHRFLEE (118 aa). Glutamate 460 lines the Mg(2+) pocket. Glycyl lysine isopeptide (Lys-Gly) (interchain with G-Cter in SUMO2) cross-links involve residues lysine 465, lysine 479, and lysine 528. Mg(2+) contacts are provided by aspartate 540 and aspartate 542. Residues lysine 583, lysine 598, lysine 613, lysine 621, lysine 624, lysine 631, lysine 638, lysine 654, lysine 661, and lysine 675 each participate in a glycyl lysine isopeptide (Lys-Gly) (interchain with G-Cter in SUMO2) cross-link. Residues 714 to 1166 form the Topo IIA-type catalytic domain; that stretch reads IPSMVDGLKP…SPSDLWKEDL (453 aa). Tyrosine 804 (O-(5'-phospho-DNA)-tyrosine intermediate) is an active-site residue. Positions 989-998 are interaction with DNA; it reads KLQTSLTCNS. Residue lysine 1074 forms a Glycyl lysine isopeptide (Lys-Gly) (interchain with G-Cter in SUMO2) linkage. Disordered regions lie at residues 1089-1117 and 1180-1217; these read WKEA…AESG and EKQD…VIPQ. The segment covering 1098–1109 has biased composition (acidic residues); the sequence is DEEENEESDNEN. Serine 1105 is modified (phosphoserine; by CK1). Glycyl lysine isopeptide (Lys-Gly) (interchain with G-Cter in SUMO2) cross-links involve residues lysine 1191 and lysine 1199. The residue at position 1208 (serine 1208) is a Phosphoserine. Lysine 1223 is covalently cross-linked (Glycyl lysine isopeptide (Lys-Gly) (interchain with G-Cter in SUMO2)). Positions 1233–1526 are disordered; it reads KIKSENVEGT…LEESDDDDLF (294 aa). Lysine 1235 is covalently cross-linked (Glycyl lysine isopeptide (Lys-Gly) (interchain with G-Cter in SUMO1); alternate). Residue lysine 1235 forms a Glycyl lysine isopeptide (Lys-Gly) (interchain with G-Cter in SUMO2); alternate linkage. The residue at position 1242 (threonine 1242) is a Phosphothreonine. A Glycyl lysine isopeptide (Lys-Gly) (interchain with G-Cter in SUMO2) cross-link involves residue lysine 1254. A compositionally biased stretch (basic and acidic residues) spans 1255–1265; sequence QRIEKKQKKEP. Glycyl lysine isopeptide (Lys-Gly) (interchain with G-Cter in SUMO2) cross-links involve residues lysine 1271, lysine 1278, and lysine 1281. Phosphoserine is present on residues serine 1290, serine 1292, serine 1294, and serine 1297. Threonine 1322 is modified (phosphothreonine). The span at 1325-1344 shows a compositional bias: acidic residues; the sequence is LDSDEDFSGSDGKDEDEDFF. 2 positions are modified to phosphoserine: serine 1327 and serine 1332. Residue threonine 1349 is modified to Phosphothreonine. Glycyl lysine isopeptide (Lys-Gly) (interchain with G-Cter in SUMO2) cross-links involve residues lysine 1358, lysine 1362, and lysine 1368. A phosphoserine mark is found at serine 1369 and serine 1372. A Glycyl lysine isopeptide (Lys-Gly) (interchain with G-Cter in SUMO2) cross-link involves residue lysine 1380. Serine 1382 and serine 1386 each carry phosphoserine. Residues 1405–1426 show a composition bias toward low complexity; that stretch reads SKQTVAVKKTATKSQSSTSTAG. Residue lysine 1417 forms a Glycyl lysine isopeptide (Lys-Gly) (interchain with G-Cter in SUMO2); alternate linkage. The residue at position 1417 (lysine 1417) is an N6-acetyllysine; alternate. Residues 1428 to 1434 are interaction with PLSCR1; sequence KKRAVPK. Lysine 1437 is covalently cross-linked (Glycyl lysine isopeptide (Lys-Gly) (interchain with G-Cter in SUMO2); alternate). Lysine 1437 is modified (N6-acetyllysine; alternate). Residues lysine 1449 and lysine 1454 each participate in a glycyl lysine isopeptide (Lys-Gly) (interchain with G-Cter in SUMO2) cross-link. 4 positions are modified to phosphoserine: serine 1464, serine 1466, serine 1469, and serine 1471. Residues lysine 1479 and lysine 1487 each participate in a glycyl lysine isopeptide (Lys-Gly) (interchain with G-Cter in SUMO2) cross-link. Residues 1486–1497 show a composition bias toward basic and acidic residues; that stretch reads SKGENQDFRVDL. Serine 1520 is modified (phosphoserine).

This sequence belongs to the type II topoisomerase family. As to quaternary structure, homodimer. Interacts with COPS5. Interacts with RECQL5; this stimulates DNA decatenation. Interacts with SETMAR; stimulates the topoisomerase activity. Interacts with DHX9; this interaction occurs in a E2 enzyme UBE2I- and RNA-dependent manner, negatively regulates DHX9-mediated double-stranded DNA and RNA duplex helicase activity and stimulates TOP2A-mediated supercoiled DNA relaxation activity. Interacts with HNRNPU (via C-terminus); this interaction protects the topoisomerase TOP2A from degradation and positively regulates the relaxation of supercoiled DNA in a RNA-dependent manner. Interacts with MCM3AP. Interacts with ERCC6. Interacts with PLSCR1. Interacts with GCNA; this interaction allows the resolution of topoisomerase II (TOP2A) DNA-protein cross-links. Interacts with POL1RA/RPA1 (via dock II) and UBTF in the context of Pol I complex; may assist Pol I transcription initiation by releasing supercoils occurring during DNA unwinding. Interacts with TPRN; TPRN interacts with a number of DNA damage response proteins, is recruited to sites of DNA damage and may play a role in DNA damage repair. Mg(2+) serves as cofactor. Requires Mn(2+) as cofactor. It depends on Ca(2+) as a cofactor. Phosphorylation has no effect on catalytic activity. However, phosphorylation at Ser-1105 by CSNK1D/CK1 promotes DNA cleavable complex formation.

Its subcellular location is the cytoplasm. The protein resides in the nucleus. It is found in the nucleoplasm. The protein localises to the nucleolus. The catalysed reaction is ATP-dependent breakage, passage and rejoining of double-stranded DNA.. In terms of biological role, key decatenating enzyme that alters DNA topology by binding to two double-stranded DNA molecules, generating a double-stranded break in one of the strands, passing the intact strand through the broken strand, and religating the broken strand. May play a role in regulating the period length of BMAL1 transcriptional oscillation. The protein is DNA topoisomerase 2-alpha (TOP2A) of Cricetulus griseus (Chinese hamster).